The following is a 492-amino-acid chain: Trehalose-6-phosphate synthase (492 aa).

D-glucose 6-phosphate is bound at residue Arg25. UDP-alpha-D-glucose is bound at residue 45-46 (GG). 2 residues coordinate D-glucose 6-phosphate: Tyr101 and Asp155. The UDP-alpha-D-glucose site is built by Arg297 and Lys302. A D-glucose 6-phosphate-binding site is contributed by Arg335. Residue 400 to 404 (LVAKE) coordinates UDP-alpha-D-glucose.

Belongs to the glycosyltransferase 20 family. As to quaternary structure, homotetramer.

It catalyses the reaction ADP-alpha-D-glucose + D-glucose 6-phosphate = alpha,alpha-trehalose 6-phosphate + ADP + H(+). The enzyme catalyses CDP-alpha-D-glucose + D-glucose 6-phosphate = alpha,alpha-trehalose 6-phosphate + CDP + H(+). The catalysed reaction is GDP-alpha-D-glucose + D-glucose 6-phosphate = alpha,alpha-trehalose 6-phosphate + GDP + H(+). It carries out the reaction TDP-alpha-D-glucose + D-glucose 6-phosphate = 5-methyl-UDP + alpha,alpha-trehalose 6-phosphate + H(+). It catalyses the reaction D-glucose 6-phosphate + UDP-alpha-D-glucose = alpha,alpha-trehalose 6-phosphate + UDP + H(+). Its pathway is glycan biosynthesis; trehalose biosynthesis. Its function is as follows. Probably involved in the osmoprotection via the biosynthesis of trehalose and in the production of glycogen and alpha-glucan via the TreS-Pep2 branch involved in the biosynthesis of maltose-1-phosphate (M1P). Catalyzes the transfer of glucose from UDP-glucose (UDP-Glc) to D-glucose 6-phosphate (Glc-6-P) to form trehalose-6-phosphate. Probably also able to use ADP-Glc, CDP-Glc, GDP-Glc and TDP-Glc as glucosyl donors. This Mycolicibacterium paratuberculosis (strain ATCC BAA-968 / K-10) (Mycobacterium paratuberculosis) protein is Trehalose-6-phosphate synthase.